Reading from the N-terminus, the 217-residue chain is Homeobox protein Hox-B7 (217 aa).

The Antp-type hexapeptide signature appears at 126 to 131 (IYPWMR). Positions 137 to 196 (RKRGRQTYTRYQTLELEKEFHYNRYLTRRRRIEIAHTLCLTERQIKIWFQNRRMKWKKEN) form a DNA-binding region, homeobox. The interval 192 to 217 (WKKENKTSGPGTTGQDKAEAEEEEEE) is disordered.

Belongs to the Antp homeobox family. Forms a DNA-binding heterodimer with transcription factor PBX1.

It localises to the nucleus. In terms of biological role, sequence-specific transcription factor which is part of a developmental regulatory system that provides cells with specific positional identities on the anterior-posterior axis. The chain is Homeobox protein Hox-B7 (Hoxb7) from Mus musculus (Mouse).